We begin with the raw amino-acid sequence, 182 residues long: Probable phosphoheptose isomerase (182 aa).

The SIS domain maps to 29 to 182 (ISSAISSGNK…MICAMIDEKF (154 aa)). Residue 44-46 (NGG) coordinates substrate. Positions 53 and 57 each coordinate Zn(2+). Residues E57, 86–87 (ND), 112–114 (STS), S117, and Q164 contribute to the substrate site. The Zn(2+) site is built by Q164 and H172.

It belongs to the SIS family. GmhA subfamily. Zn(2+) serves as cofactor.

The protein localises to the cytoplasm. It carries out the reaction 2 D-sedoheptulose 7-phosphate = D-glycero-alpha-D-manno-heptose 7-phosphate + D-glycero-beta-D-manno-heptose 7-phosphate. The protein operates within carbohydrate biosynthesis; D-glycero-D-manno-heptose 7-phosphate biosynthesis; D-glycero-alpha-D-manno-heptose 7-phosphate and D-glycero-beta-D-manno-heptose 7-phosphate from sedoheptulose 7-phosphate: step 1/1. Functionally, catalyzes the isomerization of sedoheptulose 7-phosphate in D-glycero-D-manno-heptose 7-phosphate. This chain is Probable phosphoheptose isomerase, found in Thermoplasma acidophilum (strain ATCC 25905 / DSM 1728 / JCM 9062 / NBRC 15155 / AMRC-C165).